A 617-amino-acid chain; its full sequence is Zinc finger protein 221 (617 aa).

Positions 30–100 constitute a KRAB domain; it reads VTFKDVAVVF…KTTSQREGNS (71 aa). 3 C2H2-type zinc fingers span residues 170-192, 198-220, and 226-248; these read YRCN…QQSH, HTCG…QRVH, and YKCD…QRVH. The C2H2-type 4; degenerate zinc-finger motif lies at 254-276; that stretch reads FKCGQCGKGFHSRSALNVHCKLH. 11 consecutive C2H2-type zinc fingers follow at residues 282–304, 310–332, 338–360, 366–388, 394–416, 422–444, 450–472, 478–500, 506–528, 534–556, and 562–584; these read YNCE…QRIH, FKCD…SMVH, FRCD…SMVH, YKCE…QMVH, YNCK…QQVH, FKCE…QRSH, YNCE…QRVH, YNCK…QRLH, FKCE…QTCH, and YKCE…QRVH.

It belongs to the krueppel C2H2-type zinc-finger protein family.

The protein resides in the nucleus. Functionally, may be involved in transcriptional regulation. The sequence is that of Zinc finger protein 221 (ZNF221) from Homo sapiens (Human).